Here is a 260-residue protein sequence, read N- to C-terminus: Trialysin (260 aa).

Residues 1 to 19 (MSKFWLLLLLVAAFQFAHS) form the signal peptide. A propeptide spans 20–55 (YPAAEYELDETTNDEVRQFIGDGYFEDEGDDGDEER) (removed in mature form, probably by the serine protease triapsin).

The protein belongs to the redulysin-like family. Expressed in salivary glands.

The protein resides in the secreted. It is found in the target cell membrane. Pore-forming protein that induces lysis of T.cruzi trypomastigotes, bacteria E.coli and human red blood cells. The parasite lysis is much more important than the hemolysis, probably due to difference in membrane composition. Its action on protozoan parasites and bacteria may indicate a role in the control of microorganism growth in the salivary glands. In Triatoma infestans (Assassin bug), this protein is Trialysin.